The sequence spans 783 residues: Protein involved in starch initiation 1 (783 aa).

Residues 1–27 (MGFSQAIRLNLASFSSPSPCDYCLTRV) constitute a chloroplast transit peptide. Coiled coils occupy residues 128-309 (LHDA…LKEE), 345-432 (LVFS…LELA), and 457-512 (LQEK…LKAL).

In terms of assembly, interacts with PTST2; the interaction is essential for the initiation of starch granules biosynthesis in leaf chloroplasts. Interacts with SS4; the interaction is essential for the initiation of starch granules biosynthesis in leaf chloroplasts.

The protein resides in the plastid. The protein localises to the chloroplast. In terms of biological role, required for the initiation of starch granules biosynthesis in leaf chloroplasts. Involved in determining starch granule number and size in chloroplasts. The polypeptide is Protein involved in starch initiation 1 (Arabidopsis thaliana (Mouse-ear cress)).